The chain runs to 197 residues: Phospholipid hydroperoxide glutathione peroxidase (197 aa).

S40 is subject to Phosphoserine. The active site involves U73. U73 is a non-standard amino acid (selenocysteine).

This sequence belongs to the glutathione peroxidase family. Monomer. Has a tendency to form higher mass oligomers. Interacts with FUNDC1; this interaction promotes GPX4 recruitment into mitochondria through TOM/TIM complex where it is degraded by mitophagy.

The protein localises to the mitochondrion. It is found in the cytoplasm. The catalysed reaction is a hydroperoxy polyunsaturated fatty acid + 2 glutathione = a hydroxy polyunsaturated fatty acid + glutathione disulfide + H2O. It carries out the reaction 2 glutathione + H2O2 = glutathione disulfide + 2 H2O. The enzyme catalyses tert-butyl hydroperoxide + 2 glutathione = tert-butanol + glutathione disulfide + H2O. It catalyses the reaction cumene hydroperoxide + 2 glutathione = 2-phenylpropan-2-ol + glutathione disulfide + H2O. The catalysed reaction is (9S)-hydroperoxy-(10E,12Z)-octadecadienoate + 2 glutathione = (9S)-hydroxy-(10E,12Z)-octadecadienoate + glutathione disulfide + H2O. It carries out the reaction (13S)-hydroperoxy-(9Z,11E)-octadecadienoate + 2 glutathione = (13S)-hydroxy-(9Z,11E)-octadecadienoate + glutathione disulfide + H2O. The enzyme catalyses (5S)-hydroperoxy-(6E,8Z,11Z,14Z)-eicosatetraenoate + 2 glutathione = (5S)-hydroxy-(6E,8Z,11Z,14Z)-eicosatetraenoate + glutathione disulfide + H2O. It catalyses the reaction (12R)-hydroperoxy-(5Z,8Z,10E,14Z)-eicosatetraenoate + 2 glutathione = (12R)-hydroxy-(5Z,8Z,10E,14Z)-eicosatetraenoate + glutathione disulfide + H2O. The catalysed reaction is (12S)-hydroperoxy-(5Z,8Z,10E,14Z)-eicosatetraenoate + 2 glutathione = (12S)-hydroxy-(5Z,8Z,10E,14Z)-eicosatetraenoate + glutathione disulfide + H2O. It carries out the reaction (15S)-hydroperoxy-(5Z,8Z,11Z,13E)-eicosatetraenoate + 2 glutathione = (15S)-hydroxy-(5Z,8Z,11Z,13E)-eicosatetraenoate + glutathione disulfide + H2O. The enzyme catalyses (5S)-hydroperoxy-(6E,8Z,11Z,14Z,17Z)-eicosapentaenoate + 2 glutathione = (5S)-hydroxy-(6E,8Z,11Z,14Z,17Z)-eicosapentaenoate + glutathione disulfide + H2O. It catalyses the reaction (12S)-hydroperoxy-(5Z,8Z,10E,14Z,17Z)-eicosapentaenoate + 2 glutathione = (12S)-hydroxy-(5Z,8Z,10E,14Z,17Z)-eicosapentaenoate + glutathione disulfide + H2O. The catalysed reaction is (15S)-hydroperoxy-(5Z,8Z,11Z,13E,17Z)-eicosapentaenoate + 2 glutathione = (15S)-hydroxy-(5Z,8Z,11Z,13E,17Z)-eicosapentaenoate + glutathione disulfide + H2O. It carries out the reaction (15S)-hydroperoxy-(11Z,13E)-eicosadienoate + 2 glutathione = (15S)-hydroxy-(11Z,13E)-eicosadienoate + glutathione disulfide + H2O. The enzyme catalyses (17S)-hydroperoxy-(4Z,7Z,10Z,13Z,15E,19Z)-docosahexaenoate + 2 glutathione = (17S)-hydroxy-(4Z,7Z,10Z,13Z,15E,19Z)-docosahexaenoate + glutathione disulfide + H2O. It catalyses the reaction a hydroperoxy-1,2-diacyl-glycero-3-phosphocholine + 2 glutathione = a hydroxy-1,2-diacyl-glycero-3-phosphocholine + glutathione disulfide + H2O. Its function is as follows. Essential antioxidant peroxidase that directly reduces phospholipid hydroperoxide even if they are incorporated in membranes and lipoproteins. Can also reduce fatty acid hydroperoxide, cholesterol hydroperoxide and thymine hydroperoxide. Plays a key role in protecting cells from oxidative damage by preventing membrane lipid peroxidation. Required to prevent cells from ferroptosis, a non-apoptotic cell death resulting from an iron-dependent accumulation of lipid reactive oxygen species. The presence of selenocysteine (Sec) versus Cys at the active site is essential for life: it provides resistance to overoxidation and prevents cells against ferroptosis. The presence of Sec at the active site is also essential for the survival of a specific type of parvalbumin-positive interneurons, thereby preventing against fatal epileptic seizures. May be required to protect cells from the toxicity of ingested lipid hydroperoxides. Required for normal sperm development and male fertility. Essential for maturation and survival of photoreceptor cells. Plays a role in a primary T-cell response to viral and parasitic infection by protecting T-cells from ferroptosis and by supporting T-cell expansion. Plays a role of glutathione peroxidase in platelets in the arachidonic acid metabolism. Reduces hydroperoxy ester lipids formed by a 15-lipoxygenase that may play a role as down-regulator of the cellular 15-lipoxygenase pathway. Can also reduce small soluble hydroperoxides such as H2O2, cumene hydroperoxide and tert-butyl hydroperoxide. This chain is Phospholipid hydroperoxide glutathione peroxidase, found in Pongo pygmaeus (Bornean orangutan).